A 517-amino-acid polypeptide reads, in one-letter code: Tyrosine-protein kinase Src42A (517 aa).

Positions M1 to E47 are disordered. Residues G10–D23 show a composition bias toward basic and acidic residues. Residues A63–S124 form the SH3 domain. Residues W130–C222 form the SH2 domain. Positions L248 to Y504 constitute a Protein kinase domain. ATP-binding positions include L254–V262 and K276. D370 serves as the catalytic Proton acceptor.

The protein belongs to the protein kinase superfamily. Tyr protein kinase family. SRC subfamily. In terms of tissue distribution, ubiquitous in early embryos, in stages 13-16 expression is seen in visceral mesoderm, hindgut, brain, anal pads and ventral ganglions. In larvae, expression is in CNS, wing disk, leg disk and photoreceptor precursors in the eye-antenna disks posterior to the morphogenetic furrow.

The enzyme catalyses L-tyrosyl-[protein] + ATP = O-phospho-L-tyrosyl-[protein] + ADP + H(+). Functionally, required directly or indirectly for the phosphorylation of drpr which is necessary for the interaction of drpr with shark and subsequent glial phagocytic activity. Together with drpr and shark, promotes the migration of macrophages to sites of wounding as part of a signaling cascade where Src42A detects production of hydrogen peroxide at wound sites which triggers phosphorylation of drpr and subsequent recruitment and activation of shark. Essential for correct eye morphogenesis (ommatidial R7 neuron formation) which requires the Ras1/MAPK signal transduction pathway. May be involved in the regulation of cytoskeleton organization and cell-cell contacts in developing ommatidia. Involved in phosphorylation of Dscam1, a cell surface receptor involved in targeting of growing axons during eye morphogenesis, and its interaction partner the SH2/SH3 adapter protein dock/dreadlocks. During embryogenesis, involved in regulation of dorsal closure where it may have a role in activating the JNK pathway in leading edge cells during this process. In Drosophila melanogaster (Fruit fly), this protein is Tyrosine-protein kinase Src42A.